The sequence spans 95 residues: Large ribosomal subunit protein bL21 (95 aa).

The protein belongs to the bacterial ribosomal protein bL21 family. As to quaternary structure, part of the 50S ribosomal subunit. Contacts protein L20.

Functionally, this protein binds to 23S rRNA in the presence of protein L20. This Rubrobacter xylanophilus (strain DSM 9941 / JCM 11954 / NBRC 16129 / PRD-1) protein is Large ribosomal subunit protein bL21.